The chain runs to 437 residues: Eukaryotic peptide chain release factor subunit 1 (437 aa).

Q182 bears the N5-methylglutamine mark. A Glycyl lysine isopeptide (Lys-Gly) (interchain with G-Cter in ubiquitin) cross-link involves residue K331. S421 is subject to Phosphoserine.

Belongs to the eukaryotic release factor 1 family. As to quaternary structure, component of the eRF1-eRF3-GTP ternary complex, composed of SUP45/eRF1, SUP35/eRF3 and GTP. Interacts with TPA1. N5-methylated on Gln-182 by MTQ2.

The protein localises to the cytoplasm. Functionally, component of the eRF1-eRF3-GTP ternary complex, a ternary complex that mediates translation termination in response to the termination codons. The eRF1-eRF3-GTP complex binds to a stop codon in the ribosomal A-site. SUP45/eRF1 is responsible for stop codon recognition and inducing hydrolysis of peptidyl-tRNA. Following GTP hydrolysis by SUP35/eRF3, SUP35/eRF3 dissociates, permitting SUP45/eRF1 to accommodate fully in the A-site and mediate hydrolysis of peptidyl-tRNA. The protein is Eukaryotic peptide chain release factor subunit 1 (SUP45) of Saccharomyces cerevisiae (strain ATCC 204508 / S288c) (Baker's yeast).